Consider the following 188-residue polypeptide: Peroxidase B (188 aa).

The protein belongs to the peroxidase family. In terms of processing, partially N-glycosylated.

It is found in the secreted. It carries out the reaction 2 a phenolic donor + H2O2 = 2 a phenolic radical donor + 2 H2O. This chain is Peroxidase B, found in Aloe vera (Aloe).